A 534-amino-acid chain; its full sequence is NEDD8-activating enzyme E1 regulatory subunit (534 aa).

An N-acetylalanine modification is found at A2. N6-acetyllysine occurs at positions 6 and 341. An interaction with UBA3 region spans residues 331 to 344 (DMIADSNKYIKLQN).

The protein belongs to the ubiquitin-activating E1 family. ULA1 subfamily. In terms of assembly, heterodimer of UBA3 and NAE1. The complex binds NEDD8 and UBE2M. Binds APP and TP53BP2. Ubiquitinated by TRIP12, leading to its degradation by the proteasome. Expressed throughout the brain. In hippocampus, strongly expressed in granule cells and in the pyramidal cell layer. Strongly expressed in the piriform cortex. In the cerebellum, expressed only in Purkinje cells.

It is found in the cell membrane. It functions in the pathway protein modification; protein neddylation. With respect to regulation, binding of TP53BP2 to the regulatory subunit NAE1 decreases neddylation activity. Functionally, regulatory subunit of the dimeric UBA3-NAE1 E1 enzyme. E1 activates NEDD8 by first adenylating its C-terminal glycine residue with ATP, thereafter linking this residue to the side chain of the catalytic cysteine, yielding a NEDD8-UBA3 thioester and free AMP. E1 finally transfers NEDD8 to the catalytic cysteine of UBE2M. Necessary for cell cycle progression through the S-M checkpoint. Overexpression of NAE1 causes apoptosis through deregulation of NEDD8 conjugation. The covalent attachment of NEDD8 to target proteins is known as 'neddylation' and the process is involved in the regulation of cell growth, viability and development. The chain is NEDD8-activating enzyme E1 regulatory subunit (Nae1) from Rattus norvegicus (Rat).